The sequence spans 86 residues: Putative membrane protein insertion efficiency factor (86 aa).

This sequence belongs to the UPF0161 family.

The protein localises to the cell inner membrane. Functionally, could be involved in insertion of integral membrane proteins into the membrane. This Haemophilus influenzae (strain 86-028NP) protein is Putative membrane protein insertion efficiency factor.